Reading from the N-terminus, the 172-residue chain is Adenine phosphoribosyltransferase (172 aa).

Belongs to the purine/pyrimidine phosphoribosyltransferase family. As to quaternary structure, homodimer.

Its subcellular location is the cytoplasm. The catalysed reaction is AMP + diphosphate = 5-phospho-alpha-D-ribose 1-diphosphate + adenine. It participates in purine metabolism; AMP biosynthesis via salvage pathway; AMP from adenine: step 1/1. In terms of biological role, catalyzes a salvage reaction resulting in the formation of AMP, that is energically less costly than de novo synthesis. The polypeptide is Adenine phosphoribosyltransferase (Synechococcus sp. (strain CC9605)).